We begin with the raw amino-acid sequence, 327 residues long: Probable serine/threonine-protein kinase WNK5 (327 aa).

Positions 1–48 are disordered; it reads MPPNPTPPRRATTTTTRATSGVRRGEEEQGGMAVSASAGEEEEAFEEV. A compositionally biased stretch (low complexity) spans 9–19; that stretch reads RRATTTTTRAT. Residues 39–48 are compositionally biased toward acidic residues; it reads GEEEEAFEEV. The Protein kinase domain maps to 55–314; it reads GRYADVLGLG…AAELLRDPFF (260 aa). ATP is bound at residue 136–139; sequence TEVC. Catalysis depends on Asp-203, which acts as the Proton acceptor.

It belongs to the protein kinase superfamily. Ser/Thr protein kinase family. WNK subfamily.

The catalysed reaction is L-seryl-[protein] + ATP = O-phospho-L-seryl-[protein] + ADP + H(+). It carries out the reaction L-threonyl-[protein] + ATP = O-phospho-L-threonyl-[protein] + ADP + H(+). This chain is Probable serine/threonine-protein kinase WNK5 (WNK5), found in Oryza sativa subsp. japonica (Rice).